The primary structure comprises 288 residues: 4-diphosphocytidyl-2-C-methyl-D-erythritol kinase (288 aa).

Lys8 is a catalytic residue. 90 to 100 serves as a coordination point for ATP; the sequence is PVGAGLAGGSS. Asp132 is a catalytic residue.

The protein belongs to the GHMP kinase family. IspE subfamily.

It catalyses the reaction 4-CDP-2-C-methyl-D-erythritol + ATP = 4-CDP-2-C-methyl-D-erythritol 2-phosphate + ADP + H(+). The protein operates within isoprenoid biosynthesis; isopentenyl diphosphate biosynthesis via DXP pathway; isopentenyl diphosphate from 1-deoxy-D-xylulose 5-phosphate: step 3/6. Functionally, catalyzes the phosphorylation of the position 2 hydroxy group of 4-diphosphocytidyl-2C-methyl-D-erythritol. This chain is 4-diphosphocytidyl-2-C-methyl-D-erythritol kinase, found in Chlamydia trachomatis serovar D (strain ATCC VR-885 / DSM 19411 / UW-3/Cx).